We begin with the raw amino-acid sequence, 160 residues long: Ribosomal RNA large subunit methyltransferase H (160 aa).

Positions 76 and 108 each coordinate S-adenosyl-L-methionine.

It belongs to the RNA methyltransferase RlmH family. As to quaternary structure, homodimer.

The protein localises to the cytoplasm. The catalysed reaction is pseudouridine(1915) in 23S rRNA + S-adenosyl-L-methionine = N(3)-methylpseudouridine(1915) in 23S rRNA + S-adenosyl-L-homocysteine + H(+). In terms of biological role, specifically methylates the pseudouridine at position 1915 (m3Psi1915) in 23S rRNA. This is Ribosomal RNA large subunit methyltransferase H from Nitrobacter winogradskyi (strain ATCC 25391 / DSM 10237 / CIP 104748 / NCIMB 11846 / Nb-255).